The primary structure comprises 235 residues: Elongation factor Tu (235 aa).

Residues 1–125 (KNMITGATQM…DGDKYIPTPS (125 aa)) form the tr-type G domain. Position 47-50 (47-50 (NKQD)) interacts with GTP.

The protein belongs to the TRAFAC class translation factor GTPase superfamily. Classic translation factor GTPase family. EF-Tu/EF-1A subfamily. In terms of assembly, monomer.

It is found in the cytoplasm. It catalyses the reaction GTP + H2O = GDP + phosphate + H(+). In terms of biological role, GTP hydrolase that promotes the GTP-dependent binding of aminoacyl-tRNA to the A-site of ribosomes during protein biosynthesis. The chain is Elongation factor Tu (tufA) from Leptolyngbya boryana (Plectonema boryanum).